Consider the following 470-residue polypeptide: ATP synthase subunit beta (470 aa).

Residue 157-164 participates in ATP binding; that stretch reads GGAGVGKT.

Belongs to the ATPase alpha/beta chains family. As to quaternary structure, F-type ATPases have 2 components, CF(1) - the catalytic core - and CF(0) - the membrane proton channel. CF(1) has five subunits: alpha(3), beta(3), gamma(1), delta(1), epsilon(1). CF(0) has three main subunits: a(1), b(2) and c(9-12). The alpha and beta chains form an alternating ring which encloses part of the gamma chain. CF(1) is attached to CF(0) by a central stalk formed by the gamma and epsilon chains, while a peripheral stalk is formed by the delta and b chains.

It is found in the cell inner membrane. It catalyses the reaction ATP + H2O + 4 H(+)(in) = ADP + phosphate + 5 H(+)(out). Functionally, produces ATP from ADP in the presence of a proton gradient across the membrane. The catalytic sites are hosted primarily by the beta subunits. The polypeptide is ATP synthase subunit beta (Geotalea daltonii (strain DSM 22248 / JCM 15807 / FRC-32) (Geobacter daltonii)).